Consider the following 424-residue polypeptide: Histidine--tRNA ligase (424 aa).

Belongs to the class-II aminoacyl-tRNA synthetase family. In terms of assembly, homodimer.

It localises to the cytoplasm. It catalyses the reaction tRNA(His) + L-histidine + ATP = L-histidyl-tRNA(His) + AMP + diphosphate + H(+). In Escherichia coli (strain 55989 / EAEC), this protein is Histidine--tRNA ligase.